A 514-amino-acid chain; its full sequence is 2-isopropylmalate synthase (514 aa).

The 263-residue stretch at 8–270 folds into the Pyruvate carboxyltransferase domain; the sequence is IRIFDTTLRD…DCGVVTEQLF (263 aa). Residues D17, H205, H207, and N241 each coordinate Mn(2+). A regulatory domain region spans residues 394–514; it reads RLVNLSVQCS…KEEEQEKEGI (121 aa).

It belongs to the alpha-IPM synthase/homocitrate synthase family. LeuA type 1 subfamily. As to quaternary structure, homodimer. The cofactor is Mn(2+).

It is found in the cytoplasm. It catalyses the reaction 3-methyl-2-oxobutanoate + acetyl-CoA + H2O = (2S)-2-isopropylmalate + CoA + H(+). It participates in amino-acid biosynthesis; L-leucine biosynthesis; L-leucine from 3-methyl-2-oxobutanoate: step 1/4. Catalyzes the condensation of the acetyl group of acetyl-CoA with 3-methyl-2-oxobutanoate (2-ketoisovalerate) to form 3-carboxy-3-hydroxy-4-methylpentanoate (2-isopropylmalate). This is 2-isopropylmalate synthase from Nitratidesulfovibrio vulgaris (strain DSM 19637 / Miyazaki F) (Desulfovibrio vulgaris).